The following is a 426-amino-acid chain: Serine--tRNA ligase (426 aa).

L-serine is bound at residue 227–229; sequence TSE. Residues 258–260 and Val274 contribute to the ATP site; that span reads RKE. Residue Glu281 coordinates L-serine. 345–348 contributes to the ATP binding site; the sequence is ELTS. Thr380 is a binding site for L-serine.

Belongs to the class-II aminoacyl-tRNA synthetase family. Type-1 seryl-tRNA synthetase subfamily. In terms of assembly, homodimer. The tRNA molecule binds across the dimer.

Its subcellular location is the cytoplasm. It carries out the reaction tRNA(Ser) + L-serine + ATP = L-seryl-tRNA(Ser) + AMP + diphosphate + H(+). The catalysed reaction is tRNA(Sec) + L-serine + ATP = L-seryl-tRNA(Sec) + AMP + diphosphate + H(+). It functions in the pathway aminoacyl-tRNA biosynthesis; selenocysteinyl-tRNA(Sec) biosynthesis; L-seryl-tRNA(Sec) from L-serine and tRNA(Sec): step 1/1. Its function is as follows. Catalyzes the attachment of serine to tRNA(Ser). Is also able to aminoacylate tRNA(Sec) with serine, to form the misacylated tRNA L-seryl-tRNA(Sec), which will be further converted into selenocysteinyl-tRNA(Sec). The chain is Serine--tRNA ligase from Clavibacter sepedonicus (Clavibacter michiganensis subsp. sepedonicus).